The primary structure comprises 48 residues: uncharacterized protein (48 aa).

A signal peptide spans 1-21 (MLENNVFRLMILMGGVIALIA).

This is an uncharacterized protein from Bacillus anthracis.